Reading from the N-terminus, the 488-residue chain is Probable malate:quinone oxidoreductase (488 aa).

Belongs to the MQO family. FAD is required as a cofactor.

It catalyses the reaction (S)-malate + a quinone = a quinol + oxaloacetate. It functions in the pathway carbohydrate metabolism; tricarboxylic acid cycle; oxaloacetate from (S)-malate (quinone route): step 1/1. The sequence is that of Probable malate:quinone oxidoreductase from Neisseria meningitidis serogroup C (strain 053442).